Consider the following 332-residue polypeptide: MTVTANQVLRPRGPQIERLTDTRAKVVIEPLERGYGHTLGNALRRVLLSSIPGFAITEVEIDGVLHEYTTVEGLQEDVLEVLLNLKDVAIRMHSGDSATLSLSKQGPGVVTAADIKVDHNVEILNGDHVICHLTKDTAVNMRLKIERGFGYQPAAARRRPDEETRAIGRLVLDASFSPVRRVAYAVEAARVEQRTDLDKLVIDIETNGTIDAEEAVRTAADILSDQLSVFGDFTHRDRGAAKPANNGVDPVLLRPIDDLELTVRSANCLKAESIYYIGDLIQKTEVELLKTPNLGKKSLTEIKEVLAQRGLSLGMKLENWPPAGVASHGMLG.

Positions 1–234 (MTVTANQVLR…DQLSVFGDFT (234 aa)) are alpha N-terminal domain (alpha-NTD). The tract at residues 248–332 (VDPVLLRPID…AGVASHGMLG (85 aa)) is alpha C-terminal domain (alpha-CTD).

It belongs to the RNA polymerase alpha chain family. As to quaternary structure, homodimer. The RNAP catalytic core consists of 2 alpha, 1 beta, 1 beta' and 1 omega subunit. When a sigma factor is associated with the core the holoenzyme is formed, which can initiate transcription.

It carries out the reaction RNA(n) + a ribonucleoside 5'-triphosphate = RNA(n+1) + diphosphate. Its function is as follows. DNA-dependent RNA polymerase catalyzes the transcription of DNA into RNA using the four ribonucleoside triphosphates as substrates. In Stenotrophomonas maltophilia (strain R551-3), this protein is DNA-directed RNA polymerase subunit alpha.